Consider the following 646-residue polypeptide: Lamin-1 (646 aa).

Residues 1-85 (MAEKAGEAGV…GSRATSPTSF (85 aa)) form a head region. Residues 1-94 (MAEKAGEAGV…FSRAQEKEEL (94 aa)) form a disordered region. Polar residues-rich tracts occupy residues 48 to 67 (ATPS…SMSL) and 75 to 87 (QGSR…SFSR). Residues 86-126 (SRAQEKEELQNLNDRLAKILNKLNDSEEENRTLKIRLTTVQ) are coil 1A. The 357-residue stretch at 90–446 (EKEELQNLND…KLLSDEEIRL (357 aa)) folds into the IF rod domain. The linker 1 stretch occupies residues 127–137 (QETSADLNDQI). Residues 138–281 (GKYRDELERA…SKLQRQSLSV (144 aa)) form a coil 1B region. Over residues 281 to 301 (VTTVDHHSAQSTSRRSGSDFS) the composition is skewed to polar residues. A disordered region spans residues 281–304 (VTTVDHHSAQSTSRRSGSDFSASV). The linker 2 stretch occupies residues 282-299 (TTVDHHSAQSTSRRSGSD). The segment at 300–439 (FSASVEDMRS…TELEMYNKLL (140 aa)) is coil 2. The tract at residues 440 to 646 (SDEEIRLGIT…GKGILGFFGL (207 aa)) is tail. Positions 457-471 (VRHGAKKRKLTETFY) match the Nuclear localization signal motif. The segment covering 476 to 487 (GSRSSAGSRSAG) has biased composition (low complexity). The disordered stretch occupies residues 476–513 (GSRSSAGSRSAGHNSTPVTKSQVTRTTVKTSENKSKAS). Positions 488–505 (HNSTPVTKSQVTRTTVKT) are enriched in polar residues. In terms of domain architecture, LTD spans 504-618 (KTSENKSKAS…NQMATYEVSA (115 aa)).

This sequence belongs to the intermediate filament family.

The protein localises to the nucleus. In terms of biological role, intermediate filament (IF) protein, component of the nuclear lamina, a fibrous layer on the nucleoplasmic side of the inner nuclear membrane, which is thought to provide a framework for the nuclear envelope. The protein is Lamin-1 of Hypsibius exemplaris (Freshwater tardigrade).